A 200-amino-acid chain; its full sequence is Male-specific histamine-binding salivary protein (200 aa).

A signal peptide spans 1-18; that stretch reads MKVLLLVLGAALCQNADA. Histamine is bound by residues Ser-37, Asp-41, Asp-56, and Trp-59. Cystine bridges form between Cys-65-Cys-193 and Cys-137-Cys-169. Residue Asn-79 is glycosylated (N-linked (GlcNAc...) asparagine). Histamine contacts are provided by Glu-97, Tyr-115, Phe-125, Asp-138, Glu-154, and Trp-156.

It belongs to the calycin superfamily. Histamine-binding salivary protein family. As to quaternary structure, homodimer; disulcde-linked. In terms of processing, N-glycosylated. Expressed in salivary glands.

The protein resides in the secreted. Salivary tick protein that acts by scavenging histamine at the wound site, outcompeting histamine receptors for histamine, thereby overcoming host inflammatory responses. Binds histamine with a high-affinity (Kd=1.2 nM). Contains two binding histamine sites (H and L), that appear to bind histamine with differing affinities. In Rhipicephalus appendiculatus (Brown ear tick), this protein is Male-specific histamine-binding salivary protein.